Consider the following 285-residue polypeptide: Bifunctional protein FolD (285 aa).

NADP(+) is bound by residues 165–167 (GRS), Ser190, and Ile231.

This sequence belongs to the tetrahydrofolate dehydrogenase/cyclohydrolase family. Homodimer.

The catalysed reaction is (6R)-5,10-methylene-5,6,7,8-tetrahydrofolate + NADP(+) = (6R)-5,10-methenyltetrahydrofolate + NADPH. It carries out the reaction (6R)-5,10-methenyltetrahydrofolate + H2O = (6R)-10-formyltetrahydrofolate + H(+). It participates in one-carbon metabolism; tetrahydrofolate interconversion. Catalyzes the oxidation of 5,10-methylenetetrahydrofolate to 5,10-methenyltetrahydrofolate and then the hydrolysis of 5,10-methenyltetrahydrofolate to 10-formyltetrahydrofolate. The sequence is that of Bifunctional protein FolD from Alkaliphilus oremlandii (strain OhILAs) (Clostridium oremlandii (strain OhILAs)).